A 94-amino-acid polypeptide reads, in one-letter code: Small ribosomal subunit protein eS24 (94 aa).

This sequence belongs to the eukaryotic ribosomal protein eS24 family.

In Nanoarchaeum equitans (strain Kin4-M), this protein is Small ribosomal subunit protein eS24.